Here is a 203-residue protein sequence, read N- to C-terminus: uncharacterized protein (203 aa).

Disordered stretches follow at residues 65–84 (LSLS…SFDS) and 92–170 (SSSS…ETAL). Composition is skewed to acidic residues over residues 68 to 82 (SEDE…EDSF) and 98 to 110 (SEEE…EESL). Over residues 111–122 (DSSFLVSASLSL) the composition is skewed to low complexity. Residues 123–168 (SEDDEEEDSESEDEDEDEDSDSDSDSDSDSDEDEDEDEDSEEEEET) show a composition bias toward acidic residues. Residues 182–202 (TSFLLPFTLVVLAILFYPAWV) traverse the membrane as a helical segment.

The protein localises to the membrane. This is an uncharacterized protein from Saccharomyces cerevisiae (strain ATCC 204508 / S288c) (Baker's yeast).